Consider the following 510-residue polypeptide: Beta-glucosidase 40 (510 aa).

Positions 1-29 (MAHRRLIMTMTKMMMMVTMMMMMDKTCIC) are cleaved as a signal peptide. Residues Q51, H152, and 197 to 198 (NE) each bind a beta-D-glucoside. E198 acts as the Proton donor in catalysis. A disulfide bridge connects residues C217 and C225. N-linked (GlcNAc...) asparagine glycosylation is found at N229 and N278. An a beta-D-glucoside-binding site is contributed by Y341. N349 carries N-linked (GlcNAc...) asparagine glycosylation. Residues E414, W464, 471–472 (EW), and F480 contribute to the a beta-D-glucoside site. E414 (nucleophile) is an active-site residue. N507 is a glycosylation site (N-linked (GlcNAc...) asparagine).

The protein belongs to the glycosyl hydrolase 1 family.

The enzyme catalyses Hydrolysis of terminal, non-reducing beta-D-glucosyl residues with release of beta-D-glucose.. In Arabidopsis thaliana (Mouse-ear cress), this protein is Beta-glucosidase 40.